The following is a 535-amino-acid chain: CTP synthase (535 aa).

The segment at 1–267 (MTKYIFVTGG…DQIVCDHLKL (267 aa)) is amidoligase domain. Serine 13 contributes to the CTP binding site. Serine 13 provides a ligand contact to UTP. 14-19 (SLGKGI) is an ATP binding site. Tyrosine 54 is a binding site for L-glutamine. Aspartate 71 is an ATP binding site. Mg(2+) is bound by residues aspartate 71 and glutamate 141. CTP-binding positions include 148-150 (DIE), 188-193 (KTKPTQ), and lysine 224. UTP-binding positions include 188–193 (KTKPTQ) and lysine 224. 240–242 (RDA) serves as a coordination point for ATP. Residues 292–534 (KIALVGKYVE…VRASITNKES (243 aa)) enclose the Glutamine amidotransferase type-1 domain. Glycine 354 contributes to the L-glutamine binding site. The active-site Nucleophile; for glutamine hydrolysis is the cysteine 381. L-glutamine is bound by residues 382 to 385 (LGMQ), glutamate 405, and arginine 462. Active-site residues include histidine 507 and glutamate 509.

The protein belongs to the CTP synthase family. Homotetramer.

The enzyme catalyses UTP + L-glutamine + ATP + H2O = CTP + L-glutamate + ADP + phosphate + 2 H(+). The catalysed reaction is L-glutamine + H2O = L-glutamate + NH4(+). It catalyses the reaction UTP + NH4(+) + ATP = CTP + ADP + phosphate + 2 H(+). It participates in pyrimidine metabolism; CTP biosynthesis via de novo pathway; CTP from UDP: step 2/2. Its activity is regulated as follows. Allosterically activated by GTP, when glutamine is the substrate; GTP has no effect on the reaction when ammonia is the substrate. The allosteric effector GTP functions by stabilizing the protein conformation that binds the tetrahedral intermediate(s) formed during glutamine hydrolysis. Inhibited by the product CTP, via allosteric rather than competitive inhibition. In terms of biological role, catalyzes the ATP-dependent amination of UTP to CTP with either L-glutamine or ammonia as the source of nitrogen. Regulates intracellular CTP levels through interactions with the four ribonucleotide triphosphates. The chain is CTP synthase from Bacillus cereus (strain AH187).